Here is a 448-residue protein sequence, read N- to C-terminus: MSLIASDHFRIVVGLGKSGMSLVRFLASRGVAFAVADTRENPPELATLRRDYPQVEVRCGELDVDFLCRADELYVSPGLALATPALQAAAARGVKLSGDIELFARNAKAPIVAISGSNAKSTVTTLVGEMAAAAGKRVAVGGNLGTPALDLLSDDVELYVMELSSFQLETTDQLGAEVATVLNISEDHMDRYSGLPAYHLAKHRIFRGARQVVFNRQDALTRPLIGEGLPCWTFGLSKPDFKAFGLREEDGEKYLAFEFQNLMPVRELKIRGAHNQSNALAALALGHAVGLPFDAMLAALRTFAGLEHRCQWVRDLDGVAYYNDSKATNVGAALAAIEGLGADIEGKIVLIAGGDGKGADFKDLRGPVAANCRAVILMGRDSDQIGEAIGDAVPLIRVGSLQEAVEQCRATAQPGDVVLLSPACASFDMFKNYEDRGHQFVRIVEELA.

Gly116–Thr122 contributes to the ATP binding site.

It belongs to the MurCDEF family.

It localises to the cytoplasm. It catalyses the reaction UDP-N-acetyl-alpha-D-muramoyl-L-alanine + D-glutamate + ATP = UDP-N-acetyl-alpha-D-muramoyl-L-alanyl-D-glutamate + ADP + phosphate + H(+). Its pathway is cell wall biogenesis; peptidoglycan biosynthesis. Cell wall formation. Catalyzes the addition of glutamate to the nucleotide precursor UDP-N-acetylmuramoyl-L-alanine (UMA). In Pseudomonas fluorescens (strain ATCC BAA-477 / NRRL B-23932 / Pf-5), this protein is UDP-N-acetylmuramoylalanine--D-glutamate ligase.